Reading from the N-terminus, the 310-residue chain is Olfactory receptor 4D1 (310 aa).

Residues 1 to 25 lie on the Extracellular side of the membrane; the sequence is MEPQNTTQVSMFVLLGFSQTQELQK. An N-linked (GlcNAc...) asparagine glycan is attached at Asn-5. The chain crosses the membrane as a helical span at residues 26 to 49; sequence FLFLLFLLVYVTTIVGNLLIMVTV. Topologically, residues 50–57 are cytoplasmic; sequence TFDCRLHT. Residues 58–79 form a helical membrane-spanning segment; that stretch reads PMYFLLRNLALIDLCYSTVTSP. Residues 80–100 are Extracellular-facing; that stretch reads KMLVDFLHETKTISYQGCMAQ. Cys-97 and Cys-189 are oxidised to a cystine. The chain crosses the membrane as a helical span at residues 101–120; that stretch reads IFFFHLLGGGTVFFLSVMAY. Residues 121-139 are Cytoplasmic-facing; sequence DRYIAISQPLRYVTIMNTQ. Residues 140 to 158 form a helical membrane-spanning segment; sequence LCVGLVVAAWVGGFVHSIV. Residues 159–195 are Extracellular-facing; that stretch reads QLALILPLPFCGPNILDNFYCDVPQVLRLACTDTSLL. The helical transmembrane segment at 196–219 threads the bilayer; sequence EFLMISNSGLLVIIWFLLLLISYT. At 220–235 the chain is on the cytoplasmic side; sequence VILVMLRSHSGKARRK. The helical transmembrane segment at 236-258 threads the bilayer; sequence AASTCTTHIIVVSMIFIPCIYIY. Over 259–269 the chain is Extracellular; sequence TWPFTPFLMDK. The chain crosses the membrane as a helical span at residues 270–289; it reads AVSISYTVMTPMLNPMIYTL. Over 290–310 the chain is Cytoplasmic; that stretch reads RNQDMKAAMRRLGKCLVICRE.

This sequence belongs to the G-protein coupled receptor 1 family.

It localises to the cell membrane. Odorant receptor. In Homo sapiens (Human), this protein is Olfactory receptor 4D1 (OR4D1).